The primary structure comprises 282 residues: Pantothenate synthetase (282 aa).

ATP is bound at residue 30 to 37; the sequence is MGNLHEGH. The active-site Proton donor is the histidine 37. Position 61 (glutamine 61) interacts with (R)-pantoate. Glutamine 61 contributes to the beta-alanine binding site. 148 to 151 provides a ligand contact to ATP; the sequence is GQKD. Glutamine 154 is a binding site for (R)-pantoate. ATP is bound by residues valine 177 and 185–188; that span reads LSSR.

It belongs to the pantothenate synthetase family. In terms of assembly, homodimer.

Its subcellular location is the cytoplasm. It catalyses the reaction (R)-pantoate + beta-alanine + ATP = (R)-pantothenate + AMP + diphosphate + H(+). It participates in cofactor biosynthesis; (R)-pantothenate biosynthesis; (R)-pantothenate from (R)-pantoate and beta-alanine: step 1/1. Its function is as follows. Catalyzes the condensation of pantoate with beta-alanine in an ATP-dependent reaction via a pantoyl-adenylate intermediate. The chain is Pantothenate synthetase from Acinetobacter baumannii (strain AB0057).